The primary structure comprises 378 residues: Cobalt-precorrin-5B C(1)-methyltransferase (378 aa).

Belongs to the CbiD family.

The enzyme catalyses Co-precorrin-5B + S-adenosyl-L-methionine = Co-precorrin-6A + S-adenosyl-L-homocysteine. Its pathway is cofactor biosynthesis; adenosylcobalamin biosynthesis; cob(II)yrinate a,c-diamide from sirohydrochlorin (anaerobic route): step 6/10. Functionally, catalyzes the methylation of C-1 in cobalt-precorrin-5B to form cobalt-precorrin-6A. The protein is Cobalt-precorrin-5B C(1)-methyltransferase of Synechocystis sp. (strain ATCC 27184 / PCC 6803 / Kazusa).